The chain runs to 241 residues: Centromere protein H (241 aa).

The residue at position 1 (methionine 1) is an N-acetylmethionine. The disordered stretch occupies residues 1-24 (MEEQPRERSEAGAEACEEKRGLSQ). Residues 28–186 (ERIEDRISLL…KEDVDKMENS (159 aa)) adopt a coiled-coil conformation. Lysine 61 participates in a covalent cross-link: Glycyl lysine isopeptide (Lys-Gly) (interchain with G-Cter in SUMO2). Threonine 62 carries the post-translational modification Phosphothreonine.

It belongs to the CENP-H/MCM16 family. Self-associates. Component of the CENPA-NAC complex, at least composed of CENPA, CENPC, CENPH, CENPM, CENPN, CENPT and CENPU. The CENPA-NAC complex interacts with the CENPA-CAD complex, composed of CENPI, CENPK, CENPL, CENPO, CENPP, CENPQ, CENPR and CENPS. Interacts directly with CENPK. Interacts with KIF2C and NDC80. Interacts with TRIM36. As to expression, abundantly expressed in thymus, spleen, uterus, ovary, testis and muscle, and weakly expressed in small intestine, lung and stomach. Barely detectable expression in kidney, liver, skin and prostate gland. Not detected in brain, heart or adrenal gland. Also expressed weakly in various hematopoietic cell lines.

The protein resides in the nucleus. Its subcellular location is the chromosome. It localises to the centromere. It is found in the kinetochore. Component of the CENPA-NAC (nucleosome-associated) complex, a complex that plays a central role in assembly of kinetochore proteins, mitotic progression and chromosome segregation. The CENPA-NAC complex recruits the CENPA-CAD (nucleosome distal) complex and may be involved in incorporation of newly synthesized CENPA into centromeres. Required for chromosome congression and efficiently align the chromosomes on a metaphase plate. This is Centromere protein H from Mus musculus (Mouse).